Reading from the N-terminus, the 67-residue chain is MHIKHQAVLELLKYYKLKISFIIFFFFYFFFFYFFYGFWNLNKKKKFFYKTVKNSIGQVILRDMSNN.

The chain crosses the membrane as a helical span at residues 19–39 (ISFIIFFFFYFFFFYFFYGFW).

It localises to the membrane. This is an uncharacterized protein from Dictyostelium discoideum (Social amoeba).